The primary structure comprises 246 residues: Uridylate kinase (246 aa).

Position 18-21 (18-21 (KLSG)) interacts with ATP. Glycine 60 is a binding site for UMP. The ATP site is built by glycine 61 and arginine 65. UMP contacts are provided by residues aspartate 80 and 141 to 148 (TGNPFFTT). ATP is bound by residues threonine 168, tyrosine 174, and aspartate 177.

It belongs to the UMP kinase family. In terms of assembly, homohexamer.

Its subcellular location is the cytoplasm. It catalyses the reaction UMP + ATP = UDP + ADP. It participates in pyrimidine metabolism; CTP biosynthesis via de novo pathway; UDP from UMP (UMPK route): step 1/1. With respect to regulation, inhibited by UTP. Its function is as follows. Catalyzes the reversible phosphorylation of UMP to UDP. In Pseudomonas syringae pv. syringae (strain B728a), this protein is Uridylate kinase.